We begin with the raw amino-acid sequence, 231 residues long: Cytidylate kinase (231 aa).

Residue 18–26 participates in ATP binding; that stretch reads GPSGTGKSS.

The protein belongs to the cytidylate kinase family. Type 1 subfamily.

It localises to the cytoplasm. It carries out the reaction CMP + ATP = CDP + ADP. It catalyses the reaction dCMP + ATP = dCDP + ADP. This is Cytidylate kinase from Streptomyces avermitilis (strain ATCC 31267 / DSM 46492 / JCM 5070 / NBRC 14893 / NCIMB 12804 / NRRL 8165 / MA-4680).